The primary structure comprises 155 residues: Small ribosomal subunit protein uS7cz/uS7cy (155 aa).

Belongs to the universal ribosomal protein uS7 family. As to quaternary structure, part of the 30S ribosomal subunit.

It is found in the plastid. It localises to the chloroplast. In terms of biological role, one of the primary rRNA binding proteins, it binds directly to 16S rRNA where it nucleates assembly of the head domain of the 30S subunit. The chain is Small ribosomal subunit protein uS7cz/uS7cy (rps7-A) from Oenothera argillicola (Appalachian evening primrose).